The primary structure comprises 361 residues: Phosphate acyltransferase (361 aa).

Belongs to the PlsX family. In terms of assembly, homodimer. Probably interacts with PlsY.

It localises to the cytoplasm. The enzyme catalyses a fatty acyl-[ACP] + phosphate = an acyl phosphate + holo-[ACP]. It functions in the pathway lipid metabolism; phospholipid metabolism. Its function is as follows. Catalyzes the reversible formation of acyl-phosphate (acyl-PO(4)) from acyl-[acyl-carrier-protein] (acyl-ACP). This enzyme utilizes acyl-ACP as fatty acyl donor, but not acyl-CoA. The polypeptide is Phosphate acyltransferase (Anaeromyxobacter dehalogenans (strain 2CP-C)).